The primary structure comprises 213 residues: Orotate phosphoribosyltransferase (213 aa).

Lys-26 provides a ligand contact to 5-phospho-alpha-D-ribose 1-diphosphate. 34-35 contributes to the orotate binding site; the sequence is FF. 5-phospho-alpha-D-ribose 1-diphosphate-binding positions include 72-73, Arg-99, Lys-100, Lys-103, His-105, and 124-132; these read YK and DDVITAGTA. Thr-128 and Arg-156 together coordinate orotate.

Belongs to the purine/pyrimidine phosphoribosyltransferase family. PyrE subfamily. Homodimer. Requires Mg(2+) as cofactor.

It catalyses the reaction orotidine 5'-phosphate + diphosphate = orotate + 5-phospho-alpha-D-ribose 1-diphosphate. The protein operates within pyrimidine metabolism; UMP biosynthesis via de novo pathway; UMP from orotate: step 1/2. In terms of biological role, catalyzes the transfer of a ribosyl phosphate group from 5-phosphoribose 1-diphosphate to orotate, leading to the formation of orotidine monophosphate (OMP). The protein is Orotate phosphoribosyltransferase of Klebsiella pneumoniae subsp. pneumoniae (strain ATCC 700721 / MGH 78578).